The following is a 407-amino-acid chain: Inhibin beta B chain (407 aa).

The first 28 residues, 1 to 28 (MDGLPGRALGAACLLLLAAGWLGPEAWG), serve as a signal peptide directing secretion. Residues 27–60 (WGSPTPPPSPAAPPPPPPPGALGGSQDTCTSCGG) are disordered. Residues 29 to 292 (SPTPPPSPAA…VDSRHRIRKR (264 aa)) constitute a propeptide that is removed on maturation. A compositionally biased stretch (pro residues) spans 30–46 (PTPPPSPAAPPPPPPPG). N-linked (GlcNAc...) asparagine glycosylation is present at Asn93. 4 disulfide bridges follow: Cys296-Cys304, Cys303-Cys372, Cys332-Cys404, and Cys336-Cys406.

It belongs to the TGF-beta family. Dimeric, linked by one or more disulfide bonds. Inhibin B is a dimer of alpha and beta-B. Activin B is a homodimer of beta-B. Activin AB is a dimer of beta-A and beta-B. Interacts with FST and FSTL3.

It is found in the secreted. Inhibins and activins inhibit and activate, respectively, the secretion of follitropin by the pituitary gland. Inhibins/activins are involved in regulating a number of diverse functions such as hypothalamic and pituitary hormone secretion, gonadal hormone secretion, germ cell development and maturation, erythroid differentiation, insulin secretion, nerve cell survival, embryonic axial development or bone growth, depending on their subunit composition. Inhibins appear to oppose the functions of activins. In terms of biological role, activin B is a dimer of alpha and beta-B that plays a role in several essential biological processes including embryonic development, stem cell maintenance and differentiation, haematopoiesis, cell proliferation and wound healing. Signals through type I receptor ACVR1C, abundantly expressed in pancreatic beta cells, and type II receptors like ACVR2A. Upon ligand binding, these receptors phosphorylate intracellular signaling mediators SMAD2 and SMAD3, which form a complex with SMAD4, translocate to the nucleus, and regulate gene expression. Plays a crucial role in the induction of hepcidin by inflammation through activation of ACVR1C and subsequent phosphorylation of SMAD1/5/8. Regulates adipocyte lipid metabolism by decreasing non-esterified fatty acids and glycerol release and increases intracellular triglyceride content. Stimulates wound healing by promoting cell migration and hair follicle regeneration through the JNK and ERK signaling pathways downstream of RHOA. Its function is as follows. Inhibin B is a dimer of alpha and beta-B that plays a crucial role in the regulation of the reproductive system by inhibiting the secretion of follicle-stimulating hormone (FSH) from the anterior pituitary gland. Thereby, maintains reproductive homeostasis in both males and females. Acts as a more potent suppressor of FSH release than inhibin A. Functions as competitive receptor antagonist binding activin type II receptors with high affinity in the presence of the TGF-beta type III coreceptor/TGFBR3L. This Sus scrofa (Pig) protein is Inhibin beta B chain (INHBB).